We begin with the raw amino-acid sequence, 344 residues long: Calcium homeostasis modulator protein 3 (344 aa).

At 1-20 (MDKFRMLFQHFQSSSESVMN) the chain is on the cytoplasmic side. The interval 9-36 (QHFQSSSESVMNGICLLLAAVTVKLYSS) is central pore. A helical membrane pass occupies residues 21–36 (GICLLLAAVTVKLYSS). Residues 37–48 (FDFNCPCLVHYN) are Extracellular-facing. Intrachain disulfides connect cysteine 41-cysteine 126 and cysteine 43-cysteine 157. A helical transmembrane segment spans residues 49-71 (ALYGLGLLLTPPLALFLCGLLAN). The Cytoplasmic portion of the chain corresponds to 72–98 (RQSVVMVEEWRRPAGHRRKDPGIIRYM). A lipid anchor (S-palmitoyl cysteine) is attached at cysteine 99. A helical membrane pass occupies residues 99-124 (CSSVLQRALAAPLVWILLALLDGKCF). Over 125–176 (VCAFSSSVDPEKFLDFANMTPSQVQLFLAKVPCKEDELVRDSPARKAVSRYL) the chain is Extracellular. An N-linked (GlcNAc...) asparagine glycan is attached at asparagine 142. A helical transmembrane segment spans residues 177 to 202 (RCLSQAIGWSVTLLLIIAAFLARCLR). 2 S-palmitoyl cysteine lipidation sites follow: cysteine 200 and cysteine 204. Over 203–344 (PCFDQTVFLQ…GTRLSQHTDV (142 aa)) the chain is Cytoplasmic.

It belongs to the CALHM family. In terms of assembly, associates with CALHM1 as a pore-forming subunit in a hetero-hexameric channel complex. N-glycosylated. Post-translationally, palmitoylated by ZDHHC3 and ZDHHC15. Palmitoylation positively regulates CALHM1:CALHM3 channel conductance. In terms of tissue distribution, specifically expressed in circumvallate taste bud cells.

Its subcellular location is the basolateral cell membrane. It carries out the reaction ATP(in) = ATP(out). The catalysed reaction is Ca(2+)(in) = Ca(2+)(out). It catalyses the reaction Na(+)(in) = Na(+)(out). The enzyme catalyses K(+)(in) = K(+)(out). It carries out the reaction chloride(in) = chloride(out). In terms of biological role, pore-forming subunit of gustatory voltage-gated ion channels required for sensory perception of sweet, bitter and umami tastes. With CALHM1 forms a fast-activating voltage-gated ATP-release channel in type II taste bud cells, ATP acting as a neurotransmitter to activate afferent neural gustatory pathways. Acts both as a voltage-gated and calcium-activated ion channel: mediates neuronal excitability in response to membrane depolarization and low extracellular Ca(2+) concentration. Has poor ion selectivity and forms a wide pore (around 14 Angstroms) that mediates permeation of small ions including Ca(2+), Na(+), K(+) and Cl(-), as well as larger ions such as ATP(4-). The chain is Calcium homeostasis modulator protein 3 from Homo sapiens (Human).